A 290-amino-acid polypeptide reads, in one-letter code: Expansin-A26 (290 aa).

A signal peptide spans 1–29; it reads MDTTTTMAPLPLLTTTSLLLFFFLASSFA. Residues 45-67 are disordered; that stretch reads DGGGDGEGGGGGDGEGGGGGGGA. In terms of domain architecture, Expansin-like EG45 spans 101–196; that stretch reads GGACGYKDAD…RKVACVRQGG (96 aa). Positions 206–286 constitute an Expansin-like CBD domain; that stretch reads SYNMVMVKNV…DWTYDNTYQA (81 aa). Residue N250 is glycosylated (N-linked (GlcNAc...) asparagine).

The protein belongs to the expansin family. Expansin A subfamily. In terms of tissue distribution, expressed in flowers.

The protein localises to the secreted. It localises to the cell wall. The protein resides in the membrane. Its function is as follows. May cause loosening and extension of plant cell walls by disrupting non-covalent bonding between cellulose microfibrils and matrix glucans. No enzymatic activity has been found. May be required for rapid internodal elongation in deepwater rice during submergence. The sequence is that of Expansin-A26 (EXPA26) from Oryza sativa subsp. japonica (Rice).